The following is a 313-amino-acid chain: 4-hydroxyproline 2-epimerase (313 aa).

The disordered stretch occupies residues 1–23 (MHVIDSHTGGEPTRVILSGGPHL). C85 serves as the catalytic Proton acceptor. Residues 86-87 (GH), H205, and D231 each bind substrate. C235 acts as the Proton donor in catalysis. 236–237 (GT) is a substrate binding site.

It belongs to the proline racemase family.

It catalyses the reaction trans-4-hydroxy-L-proline = cis-4-hydroxy-D-proline. Functionally, catalyzes the epimerization of trans-4-hydroxy-L-proline (t4LHyp) to cis-4-hydroxy-D-proline (c4DHyp). Is likely involved in a degradation pathway that converts t4LHyp to alpha-ketoglutarate. Displays no proline racemase activity. The polypeptide is 4-hydroxyproline 2-epimerase (Ruegeria pomeroyi (strain ATCC 700808 / DSM 15171 / DSS-3) (Silicibacter pomeroyi)).